The following is a 121-amino-acid chain: Large ribosomal subunit protein uL22 (121 aa).

The protein belongs to the universal ribosomal protein uL22 family. Part of the 50S ribosomal subunit.

In terms of biological role, this protein binds specifically to 23S rRNA; its binding is stimulated by other ribosomal proteins, e.g. L4, L17, and L20. It is important during the early stages of 50S assembly. It makes multiple contacts with different domains of the 23S rRNA in the assembled 50S subunit and ribosome. Its function is as follows. The globular domain of the protein is located near the polypeptide exit tunnel on the outside of the subunit, while an extended beta-hairpin is found that lines the wall of the exit tunnel in the center of the 70S ribosome. In Pseudarthrobacter chlorophenolicus (strain ATCC 700700 / DSM 12829 / CIP 107037 / JCM 12360 / KCTC 9906 / NCIMB 13794 / A6) (Arthrobacter chlorophenolicus), this protein is Large ribosomal subunit protein uL22.